A 547-amino-acid chain; its full sequence is Chaperonin GroEL (547 aa).

Residues 30–33 (TLGP), Lys-51, 87–91 (DGTTT), Gly-415, and Asp-496 contribute to the ATP site.

This sequence belongs to the chaperonin (HSP60) family. As to quaternary structure, forms a cylinder of 14 subunits composed of two heptameric rings stacked back-to-back. Interacts with the co-chaperonin GroES.

The protein localises to the cytoplasm. It carries out the reaction ATP + H2O + a folded polypeptide = ADP + phosphate + an unfolded polypeptide.. Functionally, together with its co-chaperonin GroES, plays an essential role in assisting protein folding. The GroEL-GroES system forms a nano-cage that allows encapsulation of the non-native substrate proteins and provides a physical environment optimized to promote and accelerate protein folding. In Chlorobium limicola (strain DSM 245 / NBRC 103803 / 6330), this protein is Chaperonin GroEL.